Here is a 103-residue protein sequence, read N- to C-terminus: Large ribosomal subunit protein bL21 (103 aa).

This sequence belongs to the bacterial ribosomal protein bL21 family. In terms of assembly, part of the 50S ribosomal subunit. Contacts protein L20.

This protein binds to 23S rRNA in the presence of protein L20. The polypeptide is Large ribosomal subunit protein bL21 (Pseudomonas paraeruginosa (strain DSM 24068 / PA7) (Pseudomonas aeruginosa (strain PA7))).